A 483-amino-acid polypeptide reads, in one-letter code: GTPase Der (483 aa).

EngA-type G domains are found at residues 3–167 and 212–387; these read FTLA…GEER and LRIA…EIWN. GTP-binding positions include 9–16, 56–60, 119–122, 218–225, 265–269, and 330–333; these read GRPNVGKS, DTAGL, NKAE, GRPNAGKS, DTAGM, and NKWD. The 85-residue stretch at 388-472 folds into the KH-like domain; the sequence is RRISTGRLNR…PIRLSLRTSD (85 aa).

The protein belongs to the TRAFAC class TrmE-Era-EngA-EngB-Septin-like GTPase superfamily. EngA (Der) GTPase family. Associates with the 50S ribosomal subunit.

Functionally, GTPase that plays an essential role in the late steps of ribosome biogenesis. This chain is GTPase Der, found in Brucella ovis (strain ATCC 25840 / 63/290 / NCTC 10512).